The following is a 410-amino-acid chain: Mitochondrial potassium channel (410 aa).

A mitochondrion-targeting transit peptide spans 1-35 (MTGCSPVFTMQQVVGVSHRLVWRTFRGTDLLMTRT). Topologically, residues 36 to 201 (LCSPGPSRPG…KERTRAERTK (166 aa)) are mitochondrial matrix. Residues 116 to 143 (VREAREDLEAQQTKLKEVRDRLDRVSRE) adopt a coiled-coil conformation. The helical transmembrane segment at 202-222 (NWSLIGSVLGALIGVAGSTYV) threads the bilayer. At 223 to 385 (NRVRLQELKA…RLEAQANRNA (163 aa)) the chain is on the mitochondrial intermembrane side. The segment at 276 to 296 (GQDQGSGSPTGPSSPRGKDID) is disordered. Positions 280–290 (GSGSPTGPSSP) are enriched in low complexity. The helical transmembrane segment at 386–406 (ISSTLVTCVTFMATLPLLYML) threads the bilayer. Topologically, residues 407 to 410 (FKTS) are mitochondrial matrix.

As to quaternary structure, the mitochondrial potassium channel (mitoK(ATP)) forms a heteromultimer.

It localises to the mitochondrion inner membrane. The catalysed reaction is K(+)(in) = K(+)(out). Channel activity inhibited by ATP via ABCB8/MITOSUR subunit. In terms of biological role, pore-forming subunit of the mitochondrial ATP-gated potassium channel (mitoK(ATP)). Together with ATP-binding subunit ABCB8/MITOSUR of the mitoK(ATP) channel, mediates ATP-dependent K(+) currents across the mitochondrial inner membrane. An increase in ATP intracellular levels closes the channel, inhibiting K(+) transport, whereas a decrease in ATP levels enhances K(+) uptake in the mitochondrial matrix. May contribute to the homeostatic control of cellular metabolism under stress conditions by regulating the mitochondrial matrix volume. The sequence is that of Mitochondrial potassium channel from Rattus norvegicus (Rat).